The sequence spans 255 residues: uncharacterized protein (255 aa).

This sequence belongs to the methyltransferase superfamily.

This is an uncharacterized protein from Mycolicibacterium gilvum (strain PYR-GCK) (Mycobacterium gilvum (strain PYR-GCK)).